We begin with the raw amino-acid sequence, 118 residues long: uncharacterized protein (118 aa).

This is an uncharacterized protein from Escherichia coli O157:H7.